The chain runs to 298 residues: Protein OS-9 homolog (298 aa).

A signal peptide spans 1–25 (MGLAGGARVVLFVVAAAAAAALTAA). The N-linked (GlcNAc...) asparagine glycan is linked to N95. In terms of domain architecture, MRH spans 121-246 (DQCFYRHEGW…TVQSPMLCKN (126 aa)). C123 and C136 are joined by a disulfide. Residues W130, W131, and Q143 each coordinate a mannooligosaccharide derivative. N-linked (GlcNAc...) asparagine glycosylation is found at N171 and N197. 2 disulfides stabilise this stretch: C201-C232 and C216-C244. The a mannooligosaccharide derivative site is built by D202, R208, E228, and Y234.

Belongs to the OS-9 family. In terms of assembly, interacts with HRD3.

The protein localises to the endoplasmic reticulum. Functionally, lectin which functions in endoplasmic reticulum (ER) quality control and ER-associated degradation (ERAD). May bind terminally misfolded non-glycosylated proteins as well as improperly folded glycoproteins, retain them in the ER, and possibly transfer them to the ubiquitination machinery and promote their degradation. The polypeptide is Protein OS-9 homolog (Oryza sativa subsp. japonica (Rice)).